A 393-amino-acid polypeptide reads, in one-letter code: Staphopain B (393 aa).

The first 36 residues, 1–36, serve as a signal peptide directing secretion; the sequence is MNSSYKSRVFNIISIIMVSMLILSLGAFANNNKAKA. A propeptide spanning residues 37 to 219 is cleaved from the precursor; it reads DSHSKQLEIN…KVEENEAIQE (183 aa). Residues C243, H340, and N360 contribute to the active site.

Belongs to the peptidase C47 family. In terms of assembly, in the cytoplasm, prematurely activated/folded SspB forms a stable non-covalent complex with SspC. In terms of processing, proteolytically cleaved by staphylococcal serine protease (SspA).

The protein resides in the secreted. With respect to regulation, prematurely activated/folded staphopain B is inhibited by staphostatin B (SspC), which is probably required to protect staphylococcal cytoplasmic proteins from degradation by SspB. Its function is as follows. Cysteine protease that plays an important role in the inhibition of host innate immune response. Degrades host elastin, fibrogen, fibronectin and kininogen. Blocks phagocytosis of opsonised S.aureus by neutrophils and monocytes by inducing their death in a proteolytic activity-dependent manner. Decreases surface expression of the 'don't eat me' signal CD31 on neutrophils. Cleaves host galectin-3/LGALS3, thereby inhibiting the neutrophil-activating ability of the lectin. This chain is Staphopain B (sspB), found in Staphylococcus aureus (strain Mu50 / ATCC 700699).